The primary structure comprises 356 residues: MIETDKLATEQRIIAATPASSHEEVFERALRPRQLDDYVGQEKVRGQLEIFIEAAKRRSEPLDHVLLFGPPGLGKTTLAHIIAREMGVNLRQTSGPVLERAGDLAALLTNLEANDVLFIDEIHRLSPVVEEILYPALEDYQIDIMIGEGPAARSVKLDLQPFTLVGATTRAGMLTNPLRDRFGIVARLEFYDAEQLSRIVRRSASLLNAQIDPNGALEIAKRSRGTPRIANRLLRRVRDFAEVKADGQITAAVADAALAMLDVDPVGFDLMDRKLLEAILYKFDGGPVGIDNLAAAIGEERDTIEDVLEPYLIQQGFLQRTPRGRVATLLTYRHFGLSVPDTGRTERGEWDTPDGK.

A large ATPase domain (RuvB-L) region spans residues 4 to 191 (TDKLATEQRI…FGIVARLEFY (188 aa)). ATP contacts are provided by residues leucine 30, arginine 31, glycine 72, lysine 75, threonine 76, threonine 77, 138 to 140 (EDY), arginine 181, tyrosine 191, and arginine 228. Residue threonine 76 coordinates Mg(2+). Residues 192–262 (DAEQLSRIVR…VADAALAMLD (71 aa)) form a small ATPAse domain (RuvB-S) region. The tract at residues 265–356 (PVGFDLMDRK…RGEWDTPDGK (92 aa)) is head domain (RuvB-H). Residues arginine 301, arginine 320, and arginine 325 each contribute to the DNA site.

The protein belongs to the RuvB family. In terms of assembly, homohexamer. Forms an RuvA(8)-RuvB(12)-Holliday junction (HJ) complex. HJ DNA is sandwiched between 2 RuvA tetramers; dsDNA enters through RuvA and exits via RuvB. An RuvB hexamer assembles on each DNA strand where it exits the tetramer. Each RuvB hexamer is contacted by two RuvA subunits (via domain III) on 2 adjacent RuvB subunits; this complex drives branch migration. In the full resolvosome a probable DNA-RuvA(4)-RuvB(12)-RuvC(2) complex forms which resolves the HJ.

The protein resides in the cytoplasm. The enzyme catalyses ATP + H2O = ADP + phosphate + H(+). Its function is as follows. The RuvA-RuvB-RuvC complex processes Holliday junction (HJ) DNA during genetic recombination and DNA repair, while the RuvA-RuvB complex plays an important role in the rescue of blocked DNA replication forks via replication fork reversal (RFR). RuvA specifically binds to HJ cruciform DNA, conferring on it an open structure. The RuvB hexamer acts as an ATP-dependent pump, pulling dsDNA into and through the RuvAB complex. RuvB forms 2 homohexamers on either side of HJ DNA bound by 1 or 2 RuvA tetramers; 4 subunits per hexamer contact DNA at a time. Coordinated motions by a converter formed by DNA-disengaged RuvB subunits stimulates ATP hydrolysis and nucleotide exchange. Immobilization of the converter enables RuvB to convert the ATP-contained energy into a lever motion, pulling 2 nucleotides of DNA out of the RuvA tetramer per ATP hydrolyzed, thus driving DNA branch migration. The RuvB motors rotate together with the DNA substrate, which together with the progressing nucleotide cycle form the mechanistic basis for DNA recombination by continuous HJ branch migration. Branch migration allows RuvC to scan DNA until it finds its consensus sequence, where it cleaves and resolves cruciform DNA. This chain is Holliday junction branch migration complex subunit RuvB, found in Burkholderia lata (strain ATCC 17760 / DSM 23089 / LMG 22485 / NCIMB 9086 / R18194 / 383).